Consider the following 69-residue polypeptide: Cold shock-like protein CspE (69 aa).

The CSD domain maps to 6–66; it reads GNVKWFNESK…GAKGPSAANV (61 aa).

It is found in the cytoplasm. The chain is Cold shock-like protein CspE (cspE) from Buchnera aphidicola subsp. Acyrthosiphon pisum (strain APS) (Acyrthosiphon pisum symbiotic bacterium).